The sequence spans 263 residues: UPF0328 protein ECU08_2060 (263 aa).

The protein belongs to the UPF0328 family.

This is UPF0328 protein ECU08_2060 from Encephalitozoon cuniculi (strain GB-M1) (Microsporidian parasite).